The following is a 159-amino-acid chain: Cytochrome P450 monooxygenase aunB (159 aa).

A heme-binding site is contributed by C134.

This sequence belongs to the cytochrome P450 family. It depends on heme as a cofactor.

It catalyses the reaction 2 fonsecin B + NADPH + O2 + H(+) = aurasperone B + NADP(+) + 2 H2O. It carries out the reaction 2 rubrofusarin B + NADPH + O2 + H(+) = aurasperone A + NADP(+) + 2 H2O. The protein operates within secondary metabolite biosynthesis. Its function is as follows. Cytochrome P450 monooxygenase; part of the gene cluster that mediates the biosynthesis of aurasperone B, a dimeric gamma-naphthopyrone. The first step in the biosynthesis of aurasperone B is the production of gamma-naphthopyrone precursor YWA1 by the non-reducing polyketide synthase albA, via condensation of one acetyl-CoA starter unit with 6 malonyl-CoA units. YWA1 is then methylated by aunE at position C-6 to yield foncesin which is further methylated at position C-8 by aunD to produce fonsecin B. A key enzyme in the biosynthetic pathway is the cytochrome P450 monooxygenase aunB which catalyzes the oxidative dimerization of fonsecin B to aurasperone B. AunB also catalyzes the oxidative dimerization of rubrofusarin B into aurasperone A. The chain is Cytochrome P450 monooxygenase aunB from Aspergillus niger (strain ATCC 1015 / CBS 113.46 / FGSC A1144 / LSHB Ac4 / NCTC 3858a / NRRL 328 / USDA 3528.7).